A 443-amino-acid polypeptide reads, in one-letter code: D-serine dehydratase (443 aa).

Lys118 carries the post-translational modification N6-(pyridoxal phosphate)lysine.

The protein belongs to the serine/threonine dehydratase family. DsdA subfamily. In terms of assembly, monomer. It depends on pyridoxal 5'-phosphate as a cofactor.

It carries out the reaction D-serine = pyruvate + NH4(+). The sequence is that of D-serine dehydratase from Photorhabdus laumondii subsp. laumondii (strain DSM 15139 / CIP 105565 / TT01) (Photorhabdus luminescens subsp. laumondii).